A 619-amino-acid chain; its full sequence is Adagio protein 3 (619 aa).

The PAS domain occupies 44–123 (VGMFYYPMTP…SEIRRCLEEG (80 aa)). At C91 the chain carries S-4a-FMN cysteine. A PAC domain is found at 127–168 (QGELLNFRKDGTPLVNRLRLAPIRDDDGTITHVIGIQVFSET). Positions 211–257 (ILQLSDEVLAHNILSRLTPRDVASIGSACRRLRQLTKNESVRKMVCQ) constitute an F-box domain. 5 Kelch repeats span residues 304–354 (SRCN…TSSP), 357–404 (RWGH…AGGT), 409–457 (RSWH…PTSW), 462–513 (RLGH…ECSA), and 523–571 (RLDH…NVPG).

The protein belongs to the ADAGIO family. As to quaternary structure, interacts with ADO1 (via Kelch repeats), ADO2 (via Kelch repeats), SKP1A/ASK1, SKP1B/ASK2, ASK3, SKP1K/ASK11, ASK12, ASK13 and SKP1N/ASK14. Interacts (via Kelch repeats) with CDF1, CDF2 and CDF3. Interacts (via N-terminus) with CO and GI (via N-terminus) in a blue-light-dependent manner. FMN binds covalently to cysteine after exposure to blue light and is reversed in the dark. As to expression, highly expressed in stomata and leaves and to a lower extent in seeds, roots, rosettes, stems and siliques. Also present in sepals and anther filaments.

The protein localises to the nucleus. It localises to the cytoplasm. It participates in protein modification; protein ubiquitination. Functionally, component of an E3 ubiquitin ligase complex that plays a central role in blue light-dependent circadian cycles. Acts as a blue light photoreceptor, due to the presence of FMN, that mediates light-regulated protein degradation of critical clock components by targeting them to the proteasome complex. The SCF(ADO3) E3 ubiquitin ligase complex is involved in the regulation of circadian clock-dependent processes including transition to flowering time, hypocotyl elongation, cotyledons and leaf movement rhythms. Forms a complex with 'GIGANTEA' (GI) to regulate 'CONSTANS' (CO) expression. Promotes CO expression during the light period of long days by decreasing the stability of CDF1 and CDF2 and by interacting directly with the CO protein and stabilizing it. ADO3 function is mainly GI dependent. Does not act as a regulator of CDF1 transcription. The interactions of ADO1/ZTL and ADO2 with ADO3 prevent its interaction with CDF1. The chain is Adagio protein 3 (ADO3) from Arabidopsis thaliana (Mouse-ear cress).